Consider the following 642-residue polypeptide: MMYVSARSGSAKRSISSLPHLSQRFKQTENEIVQMFSVPNHEESEKPQEKWKLSRKDPSVRMLDERFIRIVKIFKWGPDAEKALEVLKLKVDHRLVRSILEIDVEINVKIQFFKWAGKRRNFQHDCSTYMTLIRCLEEARLYGEMYRTIQEVVRNTYVSVSPAVLSELVKALGRAKMVSKALSVFYQAKGRKCKPTSSTYNSVILMLMQEGQHEKVHEVYTEMCNEGDCFPDTITYSALISSYEKLGRNDSAIRLFDEMKDNCMQPTEKIYTTLLGIYFKVGKVEKALDLFEEMKRAGCSPTVYTYTELIKGLGKAGRVDEAYGFYKDMLRDGLTPDVVFLNNLMNILGKVGRVEELTNVFSEMGMWRCTPTVVSYNTVIKALFESKAHVSEVSSWFDKMKADSVSPSEFTYSILIDGYCKTNRVEKALLLLEEMDEKGFPPCPAAYCSLINALGKAKRYEAANELFKELKENFGNVSSRVYAVMIKHFGKCGKLSEAVDLFNEMKNQGSGPDVYAYNALMSGMVKAGMINEANSLLRKMEENGCRADINSHNIILNGFARTGVPRRAIEMFETIKHSGIKPDGVTYNTLLGCFAHAGMFEEAARMMREMKDKGFEYDAITYSSILDAVGNVDHEKDDVSSF.

PPR repeat units follow at residues 125 to 159 (DCSTYMTLIRCLEEARLYGEMYRTIQEVVRNTYVS), 161 to 195 (SPAVLSELVKALGRAKMVSKALSVFYQAKGRKCKP), 196 to 230 (TSSTYNSVILMLMQEGQHEKVHEVYTEMCNEGDCF), 232 to 266 (DTITYSALISSYEKLGRNDSAIRLFDEMKDNCMQP), 267 to 301 (TEKIYTTLLGIYFKVGKVEKALDLFEEMKRAGCSP), 302 to 336 (TVYTYTELIKGLGKAGRVDEAYGFYKDMLRDGLTP), 337 to 371 (DVVFLNNLMNILGKVGRVEELTNVFSEMGMWRCTP), 372 to 407 (TVVSYNTVIKALFESKAHVSEVSSWFDKMKADSVSP), 408 to 442 (SEFTYSILIDGYCKTNRVEKALLLLEEMDEKGFPP), 443 to 473 (CPAAYCSLINALGKAKRYEAANELFKELKEN), 478 to 512 (SSRVYAVMIKHFGKCGKLSEAVDLFNEMKNQGSGP), 513 to 547 (DVYAYNALMSGMVKAGMINEANSLLRKMEENGCRA), 548 to 582 (DINSHNIILNGFARTGVPRRAIEMFETIKHSGIKP), and 583 to 617 (DGVTYNTLLGCFAHAGMFEEAARMMREMKDKGFEY).

Belongs to the PPR family. P subfamily.

In Arabidopsis thaliana (Mouse-ear cress), this protein is Pentatricopeptide repeat-containing protein At3g16010.